We begin with the raw amino-acid sequence, 304 residues long: Probable solute-binding protein AdeT1 (304 aa).

This sequence belongs to the bacterial solute-binding protein 7 family.

Mediates antimicrobial resistance via active efflux. Contributes to resistance to antibiotics such as chloramphenicol, erythromycin and novobiocin. May be part of a tripartite ATP-independent periplasmic (TRAP) transport system. This chain is Probable solute-binding protein AdeT1, found in Acinetobacter baumannii.